The sequence spans 236 residues: Proliferating cell nuclear antigen (236 aa).

A DNA-binding region spans residues 31-50; the sequence is RCDRNISMGMNLNNMAKMLK.

Belongs to the PCNA family.

It localises to the nucleus. In terms of biological role, this protein is an auxiliary protein of DNA polymerase delta and is involved in the control of eukaryotic DNA replication by increasing the polymerase's processibility during elongation of the leading strand. This chain is Proliferating cell nuclear antigen, found in Glycine max (Soybean).